A 651-amino-acid chain; its full sequence is MLRSSLGSVCLACRISGNAGAAPGAVAYRPQLSTAIRGSTIQLQSSLSFSTSNARQATRRERTPSRMVLSDRVGRSTARDGDKKPRRRVDGPFAGMNRTVANFDPETRSKLSRDNSNNNRSSKNGREGGKKLGRDGKGFKALNMQRSLASIGYGHRTTVKAKMQEVDSFDQFDLLPQVKDAVLNEALKGMLDIKPTPVQRLAIPALLGQTTGARSRWRTKSKPADSGSEAASPDAPPPPREEFLLAAETGSGKTLAYLVPAFNALKEAEASDPDIIAYNQRRAEERALLAKNPGSKIKTRPEPHPTMSRPRVVILVPTAELVDQVGRVAKSLSHVAKARTRMISANMSATMIENDVFSPAGIDILISTPHLLASIAESHPNILSRVSHLVVDEADSLLDRSFSEVTTPIIDRALPSIRQLVLCSATIPRRLDNYLASRFPNMRRITTPNLHAIPRRVQLGVIDVARDPYRGNKNIACADAIWSIGKEAGRHEGPVKGQVDVRRIMVFVNEREKTQEVAEYLKSKGIDAVALHRDTSEERQSEMLASFTSNETMSIPTPEGGVAGSPRSSRTLPNTKVIVATDLASRGIDTLAVRHVVLYDVPHTTIDFIHRLGRAGRMGRRGRGIVLVGNDDRKDIVAEVKESMFMGQALV.

Residues methionine 1–glutamate 61 constitute a mitochondrion transit peptide. Positions serine 45–glutamine 56 are enriched in polar residues. A disordered region spans residues serine 45–lysine 137. 2 stretches are compositionally biased toward basic and acidic residues: residues arginine 72–lysine 83 and asparagine 124–lysine 137. The Q motif motif lies at aspartate 167 to arginine 200. Residues threonine 210 to glutamate 241 are disordered. Low complexity predominate over residues alanine 224 to proline 233. One can recognise a Helicase ATP-binding domain in the interval aspartate 234 to isoleucine 445. An ATP-binding site is contributed by alanine 247 to threonine 254. Positions aspartate 392–aspartate 395 match the DEAD box motif. Positions proline 494 to valine 651 constitute a Helicase C-terminal domain.

This sequence belongs to the DEAD box helicase family. MRH4 subfamily.

It is found in the mitochondrion. It catalyses the reaction ATP + H2O = ADP + phosphate + H(+). In terms of biological role, ATP-binding RNA helicase involved in mitochondrial RNA metabolism. Required for maintenance of mitochondrial DNA. The chain is ATP-dependent RNA helicase MRH4, mitochondrial (MRH4) from Pyricularia oryzae (strain 70-15 / ATCC MYA-4617 / FGSC 8958) (Rice blast fungus).